The chain runs to 583 residues: Aspartyl protease APCB1 (583 aa).

The chain crosses the membrane as a helical span at residues 83-103; sequence LVLGLLGISLLAVAFYASVFP. The Peptidase A1 domain occupies 203–564; the sequence is YYTRILVGKP…DNVKRRIGWM (362 aa). Residues Asp-223 and Asp-431 contribute to the active site.

This sequence belongs to the peptidase A1 family. In terms of assembly, interacts with BAG6 and BAGP1.

The protein localises to the membrane. In terms of biological role, involved in proteolytic processing of BAG6 and plant basal immunity. In Arabidopsis thaliana (Mouse-ear cress), this protein is Aspartyl protease APCB1.